The sequence spans 223 residues: Probable Brix domain-containing ribosomal biogenesis protein (223 aa).

The Brix domain occupies 1–196 (MMLITTSHRP…IWIMEDGRRW (196 aa)).

Probably involved in the biogenesis of the ribosome. This Pyrococcus furiosus (strain ATCC 43587 / DSM 3638 / JCM 8422 / Vc1) protein is Probable Brix domain-containing ribosomal biogenesis protein.